Reading from the N-terminus, the 450-residue chain is Methionine aminopeptidase 2-2 (450 aa).

Basic and acidic residues-rich tracts occupy residues 1–10 and 30–39; these read MGAKISEDHP and RGAHLSRDGD. The segment at 1–100 is disordered; it reads MGAKISEDHP…PPRVPLSELF (100 aa). Residues 47-56 show a composition bias toward acidic residues; that stretch reads GDDDDDDDEG. The span at 69-86 shows a compositional bias: basic residues; the sequence is KKKKKKRKPKKKKAKKAT. Residue His211 coordinates substrate. A divalent metal cation contacts are provided by Asp232, Asp243, and His302. His310 contacts substrate. 2 residues coordinate a divalent metal cation: Glu335 and Glu431.

It belongs to the peptidase M24A family. Methionine aminopeptidase eukaryotic type 2 subfamily. Co(2+) is required as a cofactor. Zn(2+) serves as cofactor. The cofactor is Mn(2+). Requires Fe(2+) as cofactor.

The protein resides in the cytoplasm. It catalyses the reaction Release of N-terminal amino acids, preferentially methionine, from peptides and arylamides.. Its function is as follows. Cotranslationally removes the N-terminal methionine from nascent proteins. The N-terminal methionine is often cleaved when the second residue in the primary sequence is small and uncharged (Met-Ala-, Cys, Gly, Pro, Ser, Thr, or Val). The sequence is that of Methionine aminopeptidase 2-2 from Fusarium vanettenii (strain ATCC MYA-4622 / CBS 123669 / FGSC 9596 / NRRL 45880 / 77-13-4) (Fusarium solani subsp. pisi).